The chain runs to 318 residues: Thymidylate synthase (318 aa).

Residues Arg-25 and 180–181 (RR) contribute to the dUMP site. Cys-200 acts as the Nucleophile in catalysis. DUMP contacts are provided by residues 220-223 (RSGD), Asn-231, and 261-263 (HIY). Position 223 (Asp-223) interacts with (6R)-5,10-methylene-5,6,7,8-tetrahydrofolate. Ala-317 contacts (6R)-5,10-methylene-5,6,7,8-tetrahydrofolate.

It belongs to the thymidylate synthase family. Bacterial-type ThyA subfamily. In terms of assembly, homodimer.

Its subcellular location is the cytoplasm. It catalyses the reaction dUMP + (6R)-5,10-methylene-5,6,7,8-tetrahydrofolate = 7,8-dihydrofolate + dTMP. It participates in pyrimidine metabolism; dTTP biosynthesis. Functionally, catalyzes the reductive methylation of 2'-deoxyuridine-5'-monophosphate (dUMP) to 2'-deoxythymidine-5'-monophosphate (dTMP) while utilizing 5,10-methylenetetrahydrofolate (mTHF) as the methyl donor and reductant in the reaction, yielding dihydrofolate (DHF) as a by-product. This enzymatic reaction provides an intracellular de novo source of dTMP, an essential precursor for DNA biosynthesis. The protein is Thymidylate synthase of Lactobacillus gasseri (strain ATCC 33323 / DSM 20243 / BCRC 14619 / CIP 102991 / JCM 1131 / KCTC 3163 / NCIMB 11718 / NCTC 13722 / AM63).